The sequence spans 933 residues: Melanoma-associated antigen E1 (933 aa).

4 disordered regions span residues 1–113 (MSLV…VSAG), 149–236 (GASI…GINL), 256–282 (SDIS…VQST), and 360–393 (TSGL…EDEN). Residues 8–23 (SRRRRGGRANGRKNSG) are compositionally biased toward basic residues. 4 stretches are compositionally biased toward polar residues: residues 64–97 (GGSS…QLPT), 149–166 (GASI…NVQP), 173–184 (GTSVPPTFSEES), and 219–236 (APST…GINL). 2 consecutive MAGE domains span residues 467–666 (MEQN…YNEA) and 721–912 (LESK…YREA). Residues 719-933 (SRLESKSRKL…RRPLVVRNLR (215 aa)) are interaction with DTNA.

In terms of assembly, interacts with DTNA. Interacts with TRIM28.

It is found in the cytoplasm. It localises to the perinuclear region. The protein resides in the nucleus. The protein localises to the cell membrane. In terms of biological role, may enhance ubiquitin ligase activity of RING-type zinc finger-containing E3 ubiquitin-protein ligases. Proposed to act through recruitment and/or stabilization of the Ubl-conjugating enzyme (E2) at the E3:substrate complex. The polypeptide is Melanoma-associated antigen E1 (Magee1) (Rattus norvegicus (Rat)).